The primary structure comprises 746 residues: Rhizobactin receptor (746 aa).

The signal sequence occupies residues 1–26 (MGNNENGGISFCVFVVVIGFGTGAVA). Positions 40-47 (EEIVVTGG) match the TonB box motif. One can recognise a TBDR plug domain in the interval 52 to 163 (QISEIARTIY…TGGIINIITK (112 aa)). Positions 169–746 (EPGLHAEVTG…TFAVSLTKVF (578 aa)) constitute a TBDR beta-barrel domain. The TonB C-terminal box motif lies at 729-746 (FDYKGRGRTFAVSLTKVF).

The protein belongs to the TonB-dependent receptor family.

The protein resides in the cell outer membrane. Functionally, receptor for the siderophore rhizobactin. This is Rhizobactin receptor (rhtA) from Rhizobium meliloti (strain 1021) (Ensifer meliloti).